Here is a 123-residue protein sequence, read N- to C-terminus: Large ribosomal subunit protein eL8 (123 aa).

This sequence belongs to the eukaryotic ribosomal protein eL8 family. In terms of assembly, part of the 50S ribosomal subunit. Probably part of the RNase P complex.

It is found in the cytoplasm. Multifunctional RNA-binding protein that recognizes the K-turn motif in ribosomal RNA, the RNA component of RNase P, box H/ACA, box C/D and box C'/D' sRNAs. The protein is Large ribosomal subunit protein eL8 of Methanothermobacter thermautotrophicus (strain ATCC 29096 / DSM 1053 / JCM 10044 / NBRC 100330 / Delta H) (Methanobacterium thermoautotrophicum).